We begin with the raw amino-acid sequence, 555 residues long: CTP synthase (555 aa).

An amidoligase domain region spans residues 1–265 (MTRYIFITGG…GNRVCEKLNI (265 aa)). CTP is bound at residue S13. S13 provides a ligand contact to UTP. Residues 14-19 (SLGKGI) and D71 contribute to the ATP site. 2 residues coordinate Mg(2+): D71 and E139. CTP contacts are provided by residues 146–148 (DIE), 186–191 (KTKPTQ), and K222. UTP is bound by residues 186-191 (KTKPTQ) and K222. The Glutamine amidotransferase type-1 domain occupies 290–541 (TVAVVGKYVD…IKAGLAAKEA (252 aa)). Residue G351 coordinates L-glutamine. C378 functions as the Nucleophile; for glutamine hydrolysis in the catalytic mechanism. L-glutamine contacts are provided by residues 379–382 (LGMQ), E402, and R469. Residues H514 and E516 contribute to the active site.

This sequence belongs to the CTP synthase family. In terms of assembly, homotetramer.

The enzyme catalyses UTP + L-glutamine + ATP + H2O = CTP + L-glutamate + ADP + phosphate + 2 H(+). It carries out the reaction L-glutamine + H2O = L-glutamate + NH4(+). It catalyses the reaction UTP + NH4(+) + ATP = CTP + ADP + phosphate + 2 H(+). It participates in pyrimidine metabolism; CTP biosynthesis via de novo pathway; CTP from UDP: step 2/2. Allosterically activated by GTP, when glutamine is the substrate; GTP has no effect on the reaction when ammonia is the substrate. The allosteric effector GTP functions by stabilizing the protein conformation that binds the tetrahedral intermediate(s) formed during glutamine hydrolysis. Inhibited by the product CTP, via allosteric rather than competitive inhibition. Functionally, catalyzes the ATP-dependent amination of UTP to CTP with either L-glutamine or ammonia as the source of nitrogen. Regulates intracellular CTP levels through interactions with the four ribonucleotide triphosphates. This is CTP synthase from Coxiella burnetii (strain RSA 331 / Henzerling II).